The chain runs to 260 residues: Triosephosphate isomerase (260 aa).

A substrate-binding site is contributed by 11 to 13 (NWK). Histidine 103 functions as the Electrophile in the catalytic mechanism. Catalysis depends on glutamate 175, which acts as the Proton acceptor. Substrate is bound by residues glycine 181, serine 220, and 241-242 (GG).

The protein belongs to the triosephosphate isomerase family. Homodimer.

It is found in the cytoplasm. The enzyme catalyses D-glyceraldehyde 3-phosphate = dihydroxyacetone phosphate. It functions in the pathway carbohydrate biosynthesis; gluconeogenesis. Its pathway is carbohydrate degradation; glycolysis; D-glyceraldehyde 3-phosphate from glycerone phosphate: step 1/1. Its function is as follows. Involved in the gluconeogenesis. Catalyzes stereospecifically the conversion of dihydroxyacetone phosphate (DHAP) to D-glyceraldehyde-3-phosphate (G3P). The polypeptide is Triosephosphate isomerase (Shewanella halifaxensis (strain HAW-EB4)).